The sequence spans 480 residues: Endoplasmic reticulum lectin 1 (480 aa).

The N-terminal stretch at Met1–Gly27 is a signal peptide. 2 consecutive MRH domains span residues Ser108–His245 and Ser339–Ile466. A disulfide bond links Cys110 and Cys123. The segment at Val152–His172 is disordered. A compositionally biased stretch (basic and acidic residues) spans Gln163–His172. Disulfide bonds link Cys198/Cys231, Cys214/Cys243, Cys341/Cys354, Cys418/Cys452, and Cys433/Cys464.

It localises to the endoplasmic reticulum lumen. Functionally, probable lectin that binds selectively to improperly folded lumenal proteins. May function in endoplasmic reticulum quality control and endoplasmic reticulum-associated degradation (ERAD) of both non-glycosylated proteins and glycoproteins. The chain is Endoplasmic reticulum lectin 1 (erlec1) from Xenopus laevis (African clawed frog).